Reading from the N-terminus, the 300-residue chain is Putative lysophosphatidic acid:oleoyl-CoA acyltransferase (300 aa).

Residues 32–52 traverse the membrane as a helical segment; it reads WILIVVVMILRVPLCIISVTL. The HXXXXD motif signature appears at 115–120; sequence HSSPLD.

This sequence belongs to the 1-acyl-sn-glycerol-3-phosphate acyltransferase family.

The protein resides in the lipid droplet. The protein localises to the endoplasmic reticulum membrane. Its subcellular location is the golgi apparatus membrane. It catalyses the reaction a 1-acyl-sn-glycero-3-phosphate + an acyl-CoA = a 1,2-diacyl-sn-glycero-3-phosphate + CoA. Functionally, acyl-CoA-dependent lysophosphatidic acid acyltransferase with preference for oleoyl-CoA. Involved in triacylglyceride homeostasis and lipid droplet formation. Involved in vacuolar protein sorting. This is Putative lysophosphatidic acid:oleoyl-CoA acyltransferase (vps66) from Schizosaccharomyces pombe (strain 972 / ATCC 24843) (Fission yeast).